The following is a 37-amino-acid chain: Unknown protein 25 (37 aa).

The sequence is that of Unknown protein 25 from Pseudotsuga menziesii (Douglas-fir).